The sequence spans 460 residues: Cyclic 2,3-diphosphoglycerate synthetase (460 aa).

In terms of assembly, homodimer.

Its subcellular location is the cytoplasm. The enzyme catalyses (2R)-2,3-bisphosphoglycerate + ATP + H(+) = cyclic (2R)-2,3-bisphosphoglycerate + ADP + phosphate. Catalyzes the formation of cyclic 2,3-diphosphoglycerate (cDPG) by formation of an intramolecular phosphoanhydride bond at the expense of ATP. It is also able to catalyze the hydrolysis of cDPG but with significant slower rates (8-10 times). May be involved in thermoadaptation. The sequence is that of Cyclic 2,3-diphosphoglycerate synthetase (cpgS) from Methanothermus fervidus (strain ATCC 43054 / DSM 2088 / JCM 10308 / V24 S).